A 383-amino-acid chain; its full sequence is UPF0425 pyridoxal phosphate-dependent protein Msp_0916 (383 aa).

Lys207 is subject to N6-(pyridoxal phosphate)lysine.

The protein belongs to the UPF0425 family. Pyridoxal 5'-phosphate serves as cofactor.

This Methanosphaera stadtmanae (strain ATCC 43021 / DSM 3091 / JCM 11832 / MCB-3) protein is UPF0425 pyridoxal phosphate-dependent protein Msp_0916.